The primary structure comprises 459 residues: Sorting nexin-8 (459 aa).

The tract at residues 1–53 (MTGGAMDPLPTAPGAAAAEAEVDEEADPPAADSPVPPVSEPRAPDAGQMQVPP) is disordered. Residues 68–176 (ARDAVQVELV…KLFLSFSGPD (109 aa)) enclose the PX domain. 3 residues coordinate a 1,2-diacyl-sn-glycero-3-phospho-(1D-myo-inositol-3-phosphate): R104, K130, and R143.

It belongs to the sorting nexin family.

The protein resides in the early endosome membrane. In terms of biological role, may be involved in several stages of intracellular trafficking. May play a role in intracellular protein transport from early endosomes to the trans-Golgi network. The polypeptide is Sorting nexin-8 (SNX8) (Bos taurus (Bovine)).